Consider the following 151-residue polypeptide: MAPRKAKVQKEEVQVQLGPQVRDGEIVFGVAHIYASFNDTFVHVTDLSGRETIARVTGGMKVKADRDEASPYAAMLAAQDVAEKCKTLGITALHIKLRATGGNKTKTPGPGAQSALRALARSSMKIGRIEDVTPIPSDSTRRKGGRRGRRL.

The interval 131–151 is disordered; that stretch reads DVTPIPSDSTRRKGGRRGRRL. Positions 142 to 151 are enriched in basic residues; the sequence is RKGGRRGRRL.

Belongs to the universal ribosomal protein uS11 family.

The sequence is that of Small ribosomal subunit protein uS11A from Drosophila melanogaster (Fruit fly).